The chain runs to 117 residues: Large ribosomal subunit protein bL20c (117 aa).

This sequence belongs to the bacterial ribosomal protein bL20 family.

The protein localises to the plastid. It is found in the chloroplast. Its function is as follows. Binds directly to 23S ribosomal RNA and is necessary for the in vitro assembly process of the 50S ribosomal subunit. It is not involved in the protein synthesizing functions of that subunit. This chain is Large ribosomal subunit protein bL20c, found in Buxus microphylla (Littleleaf boxwood).